The following is a 237-amino-acid chain: Phosphoadenosine 5'-phosphosulfate reductase (237 aa).

Catalysis depends on Cys-231, which acts as the Nucleophile; cysteine thiosulfonate intermediate.

The protein belongs to the PAPS reductase family. CysH subfamily.

Its subcellular location is the cytoplasm. The enzyme catalyses [thioredoxin]-disulfide + sulfite + adenosine 3',5'-bisphosphate + 2 H(+) = [thioredoxin]-dithiol + 3'-phosphoadenylyl sulfate. It functions in the pathway sulfur metabolism; hydrogen sulfide biosynthesis; sulfite from sulfate: step 3/3. In terms of biological role, catalyzes the formation of sulfite from phosphoadenosine 5'-phosphosulfate (PAPS) using thioredoxin as an electron donor. The sequence is that of Phosphoadenosine 5'-phosphosulfate reductase from Xylella fastidiosa (strain M12).